The sequence spans 249 residues: Superoxide dismutase 1 copper chaperone (249 aa).

The HMA domain maps to 6 to 69; sequence TYEATYAIPM…TLRNCGKDAI (64 aa). Position 16 (histidine 16) interacts with Zn(2+). 2 residues coordinate Cu cation: cysteine 17 and cysteine 20. Residues cysteine 27 and cysteine 64 are joined by a disulfide bond. Positions 229 and 231 each coordinate Cu cation.

The protein belongs to the CCS1 family. Homodimer, and heterodimer with apo-SOD1. Zinc-binding at His-16 of CCS1 and 'Glu-43' of apo-SOD1 is required for this heterodimerization. Cu(2+) is required as a cofactor.

It is found in the cytoplasm. Its subcellular location is the mitochondrion intermembrane space. Functionally, copper chaperone for apo superoxide dismutase 1 (SOD1). Binds copper ions and delivers them specifically to apo-SOD1. The protein is Superoxide dismutase 1 copper chaperone (CCS1) of Saccharomyces cerevisiae (strain ATCC 204508 / S288c) (Baker's yeast).